The chain runs to 507 residues: Maturase K (507 aa).

Belongs to the intron maturase 2 family. MatK subfamily.

The protein resides in the plastid. Its subcellular location is the chloroplast. Usually encoded in the trnK tRNA gene intron. Probably assists in splicing its own and other chloroplast group II introns. This Lens ervoides (Beaded lentil) protein is Maturase K.